Consider the following 476-residue polypeptide: Bifunctional protein HldE (476 aa).

The ribokinase stretch occupies residues 1–319 (MKVSLPAFEK…EALALHHGES (319 aa)). Position 195–198 (195–198 (NMSE)) interacts with ATP. The active site involves Asp264. The interval 345–476 (MTNGCFDILH…AIIQNIMANQ (132 aa)) is cytidylyltransferase.

It in the N-terminal section; belongs to the carbohydrate kinase PfkB family. In the C-terminal section; belongs to the cytidylyltransferase family. As to quaternary structure, homodimer.

The enzyme catalyses D-glycero-beta-D-manno-heptose 7-phosphate + ATP = D-glycero-beta-D-manno-heptose 1,7-bisphosphate + ADP + H(+). The catalysed reaction is D-glycero-beta-D-manno-heptose 1-phosphate + ATP + H(+) = ADP-D-glycero-beta-D-manno-heptose + diphosphate. It functions in the pathway nucleotide-sugar biosynthesis; ADP-L-glycero-beta-D-manno-heptose biosynthesis; ADP-L-glycero-beta-D-manno-heptose from D-glycero-beta-D-manno-heptose 7-phosphate: step 1/4. It participates in nucleotide-sugar biosynthesis; ADP-L-glycero-beta-D-manno-heptose biosynthesis; ADP-L-glycero-beta-D-manno-heptose from D-glycero-beta-D-manno-heptose 7-phosphate: step 3/4. Its function is as follows. Catalyzes the phosphorylation of D-glycero-D-manno-heptose 7-phosphate at the C-1 position to selectively form D-glycero-beta-D-manno-heptose-1,7-bisphosphate. Catalyzes the ADP transfer from ATP to D-glycero-beta-D-manno-heptose 1-phosphate, yielding ADP-D-glycero-beta-D-manno-heptose. The polypeptide is Bifunctional protein HldE (Shewanella sp. (strain W3-18-1)).